The sequence spans 194 residues: VVGGDECNINEHRSLVAIFVSTGFFCSGTLINQEVLNQEDKFICPNXKKNNEVLDVTNSENIVPLSLPSSPPSVGSVCRIMGWGTITPEKKTYPNVPHCANINLLDDAECHVGYERQGKEYRTLCAGVVQGGKDTCQGDSGGPLICNGQFQGIVSWGPHPCGHPGEPGVYTKVFDYTEWIQSIIAGNTAATCPP.

5 disulfide bridges follow: C7-C99, C44-C192, C78-C146, C110-C125, and C136-C161. The Peptidase S1 domain occupies 36–185 (LNQEDKFICP…YTEWIQSIIA (150 aa)). S140 functions as the Charge relay system in the catalytic mechanism.

This sequence belongs to the peptidase S1 family. Snake venom subfamily. Monomer. Post-translationally, N-glycosylated. In terms of tissue distribution, expressed by the venom gland.

The protein localises to the secreted. With respect to regulation, completely inhibited by the serine protease inhibitors NPGB and PMSF, partially inhibited by benzamidines, and weakly or not inhibited by SBTI and EDTA. Functionally, shows kallikrein-like activity, releasing bradykinin from kininogen. Also activates plasminogen, which is also a plasma kallikrein activity. Is active upon the kallikrein substrates S-2266 and S-2302, suggesting a preference for Arg in P1 position. In vivo, lowers blood pressure after intravenous injection in rat. This chain is Kallikrein-like enzyme LV-Ka, found in Lachesis muta muta (Bushmaster).